A 100-amino-acid polypeptide reads, in one-letter code: Toxin ParE3 (100 aa).

The protein belongs to the RelE toxin family.

In terms of biological role, toxic component of a type II toxin-antitoxin (TA) system. Its toxic effect is neutralized by coexpression with cognate antitoxin ParD3 but no other ParD or RelB antitoxin. This chain is Toxin ParE3 (parE3), found in Caulobacter vibrioides (strain ATCC 19089 / CIP 103742 / CB 15) (Caulobacter crescentus).